Here is a 773-residue protein sequence, read N- to C-terminus: Mitochondrial inner membrane m-AAA protease component yta12 (773 aa).

Positions 83–119 are disordered; the sequence is FSVTSKRSQNGSSGSNSDANGRKNGQKNDDSKKKGLN. The segment covering 87 to 101 has biased composition (low complexity); that stretch reads SKRSQNGSSGSNSDA. 2 consecutive transmembrane segments (helical) span residues 126 to 146 and 239 to 259; these read VFEIALNGNTILGGILVAYIL and VLATLLSFAPTLLIIGSVIYL. ATP contacts are provided by valine 298, alanine 299, threonine 340, glycine 341, lysine 342, threonine 343, leucine 344, and histidine 479. Histidine 561 lines the Zn(2+) pocket. Glutamate 562 is a catalytic residue. Zn(2+) contacts are provided by histidine 565 and aspartate 638. The tract at residues 752–773 is disordered; that stretch reads EYKNDHDPRNPPIPPSPQQPSA. Positions 761-773 are enriched in pro residues; it reads NPPIPPSPQQPSA.

In the N-terminal section; belongs to the AAA ATPase family. The protein in the C-terminal section; belongs to the peptidase M41 family. Component of the m-AAA protease complex. Zn(2+) serves as cofactor.

Its subcellular location is the mitochondrion membrane. It catalyses the reaction ATP + H2O = ADP + phosphate + H(+). In terms of biological role, catalytic component of the m-AAA protease, a protease that plays a key role in proteostasis of inner mitochondrial membrane proteins. Possesses both ATPase and protease activities: the ATPase activity is required to unfold substrates, threading them into the internal proteolytic cavity for hydrolysis into small peptide fragments. The complex is necessary for the assembly of mitochondrial respiratory chain and ATPase complexes. The m-AAA protease carries out protein quality control in the inner membrane of the mitochondria by mediating degradation of mistranslated or misfolded polypeptides. It also mediates protein maturation of the mitochondrial ribosomal subunit mrpl32/bL32m by catalyzing the cleavage of the presequence of mrpl32/bL32m prior to assembly into the mitochondrial ribosome. Also acts as a membrane protein dislocase: required to dislocate moderately hydrophobic transmembrane segments from the membrane. The chain is Mitochondrial inner membrane m-AAA protease component yta12 (yta12) from Schizosaccharomyces pombe (strain 972 / ATCC 24843) (Fission yeast).